Reading from the N-terminus, the 491-residue chain is Cytochrome P450 2K3 (491 aa).

Cys434 is a binding site for heme.

The protein belongs to the cytochrome P450 family. The cofactor is heme.

Its subcellular location is the endoplasmic reticulum membrane. The protein localises to the microsome membrane. It carries out the reaction an organic molecule + reduced [NADPH--hemoprotein reductase] + O2 = an alcohol + oxidized [NADPH--hemoprotein reductase] + H2O + H(+). The polypeptide is Cytochrome P450 2K3 (cyp2k3) (Oncorhynchus mykiss (Rainbow trout)).